We begin with the raw amino-acid sequence, 97 residues long: Large ribosomal subunit protein uL23 (97 aa).

The protein belongs to the universal ribosomal protein uL23 family. Part of the 50S ribosomal subunit. Contacts protein L29, and trigger factor when it is bound to the ribosome.

Its function is as follows. One of the early assembly proteins it binds 23S rRNA. One of the proteins that surrounds the polypeptide exit tunnel on the outside of the ribosome. Forms the main docking site for trigger factor binding to the ribosome. This is Large ribosomal subunit protein uL23 from Anaeromyxobacter sp. (strain Fw109-5).